A 145-amino-acid polypeptide reads, in one-letter code: MIALIQRVTRASVTVEGEVTGEIGAGLLVLLGVEKDDDEQKANRLCERVLGYRIFSDAEGKMNLNVQQAGGSVLVVSQFTLAADTERGMRPSFSKGASPDRAEALYDYFVERCCQQEMNTQTGRFAADMQVSLVNDGPVTFWLQV.

Positions 137–138 (GP) match the Gly-cisPro motif, important for rejection of L-amino acids motif.

This sequence belongs to the DTD family. In terms of assembly, homodimer.

The protein localises to the cytoplasm. It catalyses the reaction glycyl-tRNA(Ala) + H2O = tRNA(Ala) + glycine + H(+). It carries out the reaction a D-aminoacyl-tRNA + H2O = a tRNA + a D-alpha-amino acid + H(+). An aminoacyl-tRNA editing enzyme that deacylates mischarged D-aminoacyl-tRNAs. Also deacylates mischarged glycyl-tRNA(Ala), protecting cells against glycine mischarging by AlaRS. Acts via tRNA-based rather than protein-based catalysis; rejects L-amino acids rather than detecting D-amino acids in the active site. By recycling D-aminoacyl-tRNA to D-amino acids and free tRNA molecules, this enzyme counteracts the toxicity associated with the formation of D-aminoacyl-tRNA entities in vivo and helps enforce protein L-homochirality. This Shigella dysenteriae serotype 1 (strain Sd197) protein is D-aminoacyl-tRNA deacylase.